A 342-amino-acid chain; its full sequence is Hypoxia responsive morphology factor C (342 aa).

Residues 46–68 (RMKIPRRKSEYSSHDRLKRARKI) carry the Bipartite nuclear localization signal motif. The segment at 151–181 (ADDAWAYNAADMDTAVKFFSEAIYKAIESSP) is RNA recognition motif (RRM)-like domain.

The protein belongs to the hrmA family.

It localises to the nucleus. Functionally, probably modulates the generation of the hypoxia-typic morphotype (called H-MORPH) with altered biofilm architecture that leads to increased host inflammation, rapid disease progression, and mortality in a murine model of invasive aspergillosis. This Aspergillus fumigatus (strain CBS 144.89 / FGSC A1163 / CEA10) (Neosartorya fumigata) protein is Hypoxia responsive morphology factor C.